The primary structure comprises 197 residues: Recombination protein RecR (197 aa).

The segment at 55-70 adopts a C4-type zinc-finger fold; sequence CVQCRDFTESEICTIC. A Toprim domain is found at 78-173; that stretch reads QQLCVVESPA…RPSRLAQGMP (96 aa).

Belongs to the RecR family.

May play a role in DNA repair. It seems to be involved in an RecBC-independent recombinational process of DNA repair. It may act with RecF and RecO. In Xanthomonas axonopodis pv. citri (strain 306), this protein is Recombination protein RecR.